Consider the following 177-residue polypeptide: Phycoerythrin beta subunit (177 aa).

Tyr-18, Lys-28, Asn-35, and Asp-39 together coordinate (2R,3E)-phycoerythrobilin. 3 residues coordinate 15,16-dihydrobiliverdin: Cys-50, Asp-54, and Cys-61. Residues Cys-82, Arg-84, and Asp-85 each coordinate (2R,3E)-phycoerythrobilin. Arg-129 is a 15,16-dihydrobiliverdin binding site. Asn-144 is a (2R,3E)-phycoerythrobilin binding site. 15,16-dihydrobiliverdin-binding residues include Gln-148 and Lys-149. The (2R,3E)-phycoerythrobilin site is built by Pro-154, Gly-156, and Cys-158.

It belongs to the phycobiliprotein family. Heterotetramer of 2 different alpha chains and 2 identical beta chains which form 2 alpha-beta heterodimers within the heterotetramer. The two alpha-beta heterodimers are rotated to an open configuration in contrast to the closed configuration found in other cryptophyte species due to the insertion of a single amino acid, 'Asp-65', in a conserved region of the alpha chain. In the open form, the central chromophores are not in physical contact but are separated by a water-filled channel. Post-translationally, contains three phycoerythrobilin chromophores and one 15,16-dihydrobiliverdin chromophore with binding of the phycoerythrobilin chromophores mediated by both the alpha and beta subunits.

Its subcellular location is the plastid. It localises to the chloroplast thylakoid membrane. Light-harvesting photosynthetic bile pigment-protein from the phycobiliprotein complex. In Hemiselmis andersenii (Cryptophyte alga), this protein is Phycoerythrin beta subunit.